The primary structure comprises 247 residues: ATP synthase subunit a 1 (247 aa).

The next 6 helical transmembrane spans lie at 32–52 (YMLL…RALV), 82–102 (FFPL…VGII), 112–132 (IIVT…YGFY), 141–161 (LFVP…IEII), 181–201 (GHVT…LGFV), and 206–226 (ALLP…VAFL).

It belongs to the ATPase A chain family. As to quaternary structure, F-type ATPases have 2 components, CF(1) - the catalytic core - and CF(0) - the membrane proton channel. CF(1) has five subunits: alpha(3), beta(3), gamma(1), delta(1), epsilon(1). CF(0) has four main subunits: a, b, b' and c.

The protein resides in the cell inner membrane. In terms of biological role, key component of the proton channel; it plays a direct role in the translocation of protons across the membrane. The sequence is that of ATP synthase subunit a 1 from Bradyrhizobium sp. (strain BTAi1 / ATCC BAA-1182).